A 495-amino-acid chain; its full sequence is ATP synthase subunit beta, chloroplastic (495 aa).

172 to 179 is a binding site for ATP; sequence GGAGVGKT.

It belongs to the ATPase alpha/beta chains family. F-type ATPases have 2 components, CF(1) - the catalytic core - and CF(0) - the membrane proton channel. CF(1) has five subunits: alpha(3), beta(3), gamma(1), delta(1), epsilon(1). CF(0) has four main subunits: a(1), b(1), b'(1) and c(9-12).

It is found in the plastid. The protein localises to the chloroplast thylakoid membrane. It catalyses the reaction ATP + H2O + 4 H(+)(in) = ADP + phosphate + 5 H(+)(out). Functionally, produces ATP from ADP in the presence of a proton gradient across the membrane. The catalytic sites are hosted primarily by the beta subunits. The chain is ATP synthase subunit beta, chloroplastic from Barnardia japonica (Chinese squill).